The following is a 542-amino-acid chain: Chaperonin GroEL (542 aa).

ATP contacts are provided by residues 29-32 (TMGP), Lys50, 86-90 (DGTTT), Gly414, 477-479 (NAA), and Asp493.

The protein belongs to the chaperonin (HSP60) family. Forms a cylinder of 14 subunits composed of two heptameric rings stacked back-to-back. Interacts with the co-chaperonin GroES.

It is found in the cytoplasm. The enzyme catalyses ATP + H2O + a folded polypeptide = ADP + phosphate + an unfolded polypeptide.. Functionally, together with its co-chaperonin GroES, plays an essential role in assisting protein folding. The GroEL-GroES system forms a nano-cage that allows encapsulation of the non-native substrate proteins and provides a physical environment optimized to promote and accelerate protein folding. This chain is Chaperonin GroEL, found in Sulfurimonas denitrificans (strain ATCC 33889 / DSM 1251) (Thiomicrospira denitrificans (strain ATCC 33889 / DSM 1251)).